Consider the following 267-residue polypeptide: Cilia- and flagella-associated protein 300 (267 aa).

The protein belongs to the CFAP300 family. In terms of assembly, interacts with DNAAF2.

Its subcellular location is the cytoplasm. The protein resides in the cytoskeleton. The protein localises to the cilium axoneme. Cilium- and flagellum-specific protein that plays a role in axonemal structure organization and motility. May play a role in outer and inner dynein arm assembly. The chain is Cilia- and flagella-associated protein 300 from Bos taurus (Bovine).